We begin with the raw amino-acid sequence, 166 residues long: Crossover junction endodeoxyribonuclease RuvC (166 aa).

Catalysis depends on residues Asp12, Glu71, and Asp143. Positions 12, 71, and 143 each coordinate Mg(2+).

Belongs to the RuvC family. In terms of assembly, homodimer which binds Holliday junction (HJ) DNA. The HJ becomes 2-fold symmetrical on binding to RuvC with unstacked arms; it has a different conformation from HJ DNA in complex with RuvA. In the full resolvosome a probable DNA-RuvA(4)-RuvB(12)-RuvC(2) complex forms which resolves the HJ. Mg(2+) serves as cofactor.

The protein localises to the cytoplasm. It catalyses the reaction Endonucleolytic cleavage at a junction such as a reciprocal single-stranded crossover between two homologous DNA duplexes (Holliday junction).. The RuvA-RuvB-RuvC complex processes Holliday junction (HJ) DNA during genetic recombination and DNA repair. Endonuclease that resolves HJ intermediates. Cleaves cruciform DNA by making single-stranded nicks across the HJ at symmetrical positions within the homologous arms, yielding a 5'-phosphate and a 3'-hydroxyl group; requires a central core of homology in the junction. The consensus cleavage sequence is 5'-(A/T)TT(C/G)-3'. Cleavage occurs on the 3'-side of the TT dinucleotide at the point of strand exchange. HJ branch migration catalyzed by RuvA-RuvB allows RuvC to scan DNA until it finds its consensus sequence, where it cleaves and resolves the cruciform DNA. The chain is Crossover junction endodeoxyribonuclease RuvC from Oleidesulfovibrio alaskensis (strain ATCC BAA-1058 / DSM 17464 / G20) (Desulfovibrio alaskensis).